A 438-amino-acid polypeptide reads, in one-letter code: GTPase Obg (438 aa).

The 159-residue stretch at 2 to 160 folds into the Obg domain; that stretch reads SMFLDTAKIS…RELELELKIL (159 aa). The segment at 128–147 is disordered; the sequence is NIRFATPRNPAPEIAENGEP. Residues 161-338 form the OBG-type G domain; the sequence is ADVGLVGFPS…LLDATANLLA (178 aa). Residues 167 to 174, 192 to 196, 214 to 217, 284 to 287, and 319 to 321 contribute to the GTP site; these read GFPSVGKS, FTTIV, DLPG, NKMD, and STL. Residues Ser174 and Thr194 each coordinate Mg(2+). An OCT domain is found at 360–438; the sequence is GFSEEEKAFE…IGNFEFEFVD (79 aa).

Belongs to the TRAFAC class OBG-HflX-like GTPase superfamily. OBG GTPase family. In terms of assembly, monomer. It depends on Mg(2+) as a cofactor.

It localises to the cytoplasm. An essential GTPase which binds GTP, GDP and possibly (p)ppGpp with moderate affinity, with high nucleotide exchange rates and a fairly low GTP hydrolysis rate. Plays a role in control of the cell cycle, stress response, ribosome biogenesis and in those bacteria that undergo differentiation, in morphogenesis control. The polypeptide is GTPase Obg (Streptococcus uberis (strain ATCC BAA-854 / 0140J)).